Consider the following 320-residue polypeptide: Ferrochelatase (320 aa).

Residues H194 and E275 each contribute to the Fe cation site.

It belongs to the ferrochelatase family. As to quaternary structure, monomer.

Its subcellular location is the cytoplasm. The enzyme catalyses heme b + 2 H(+) = protoporphyrin IX + Fe(2+). Its pathway is porphyrin-containing compound metabolism; protoheme biosynthesis; protoheme from protoporphyrin-IX: step 1/1. Functionally, catalyzes the ferrous insertion into protoporphyrin IX. In Salmonella paratyphi A (strain ATCC 9150 / SARB42), this protein is Ferrochelatase.